The primary structure comprises 420 residues: ATP phosphoribosyltransferase regulatory subunit (420 aa).

It belongs to the class-II aminoacyl-tRNA synthetase family. HisZ subfamily. In terms of assembly, heteromultimer composed of HisG and HisZ subunits.

The protein localises to the cytoplasm. It functions in the pathway amino-acid biosynthesis; L-histidine biosynthesis; L-histidine from 5-phospho-alpha-D-ribose 1-diphosphate: step 1/9. Its function is as follows. Required for the first step of histidine biosynthesis. May allow the feedback regulation of ATP phosphoribosyltransferase activity by histidine. The polypeptide is ATP phosphoribosyltransferase regulatory subunit (Synechococcus sp. (strain ATCC 27144 / PCC 6301 / SAUG 1402/1) (Anacystis nidulans)).